The sequence spans 647 residues: MKKEEYLEKVALANLWMRAYYEKDEPLASDEEYDALIRELRAFEEQNKDEISKDSPTQKIAPTIQSEFKKIAHLKRMWSMEDVFDESEFRAWAKRAKCEKNFFIEPKFDGASLNLLYENGKLVSGATRGDGEVGEDITLNVFEIENIPKNIAYKERIEIRGEVVILKDDFEKINEKRALLNQSLFANPRNAASGSLRQLDTSITKERNLKFYPWGLGENTLNFTKHSEVMQFIRELGFLKDDFVRLCVNLDEVLKAYDELLALREKKPMMMDGMVVRIDDLALCEELGYTVKFPKFMAAFKFPALEKTTRLIGVNLQVGRSGVITPVAVLEPVNLDGVVVKSATLHNFDEIARLDVKINDFVSVIRSGDVIPKITKVFKERREGLEMEISRPKLCPTCQSELLDEGTLIKCQNIDCEDRLVNSIIHFVSKKCLNIDGLGENIVELLYKHKKITTLESIFHLKFNDFEGLEGFKEKKINNLLNAIEQARECELFRFITALGIEHIGEVAAKKLSLSFGKEWHKQSFEAYANLEGFGEQMALSLCEFTRVNRTRIDEFYKLLNLKIEKLEIKSDGVIFGKTFVITGTLSRSRDEFKALIEKLGGKVSGSVSKKTDYVLFGEEAGSKLIKAKELEIKCIDESAFNELVKE.

Residues 30-34 (DEEYD), 79-80 (SM), and glutamate 105 contribute to the NAD(+) site. The active-site N6-AMP-lysine intermediate is lysine 107. Residues arginine 128, glutamate 162, and lysine 301 each coordinate NAD(+). Cysteine 395, cysteine 398, cysteine 411, and cysteine 416 together coordinate Zn(2+). Residues 570-647 (KSDGVIFGKT…ESAFNELVKE (78 aa)) enclose the BRCT domain.

The protein belongs to the NAD-dependent DNA ligase family. LigA subfamily. It depends on Mg(2+) as a cofactor. Mn(2+) is required as a cofactor.

The enzyme catalyses NAD(+) + (deoxyribonucleotide)n-3'-hydroxyl + 5'-phospho-(deoxyribonucleotide)m = (deoxyribonucleotide)n+m + AMP + beta-nicotinamide D-nucleotide.. DNA ligase that catalyzes the formation of phosphodiester linkages between 5'-phosphoryl and 3'-hydroxyl groups in double-stranded DNA using NAD as a coenzyme and as the energy source for the reaction. It is essential for DNA replication and repair of damaged DNA. This chain is DNA ligase, found in Campylobacter jejuni subsp. jejuni serotype O:6 (strain 81116 / NCTC 11828).